A 972-amino-acid chain; its full sequence is MATRGHVQDPNDRRLRPIYDYLDNGNNKMAIQQADKLLKKHKDLHCAKVLKAIGLQRTGKQEEAFTLAQEVAALEPTDDNSLQALTILYREMHRPELVTKLYEAAVKKVPNSEEYHSHLFMAYARVGEYKKMQQAGMALYKIVPKNPYYFWSVMSLIMQSISAQDENLSKTMFLPLAERMVEKMVKEDKIEAEAEVELYYMILERLGKYQEALDVIRGKLGEKLTSEIQSRENKCMAMYKKLSRWPECNALSRRLLLKNSDDWQFYLTYFDSVFRLIEEAWSPPAEGEHSLEGEVHYSAEKAVKFIEDRITEESKSSRHLRGPHLAKLELIRRLRSQGCNDEYKLGDPEELMFQYFKKFGDKPCCFTDLKVFVDLLPATQCTKFINQLLGVVPLSTPTEDKLALPADIRALQQHLCVVQLTRLLGLYHTMDKNQKLSVVRELMLRYQHGLEFGKTCLKTELQFSDYYCLLAVHALIDVWRETGDETTVWQALTLLEEGLTHSPSNAQFKLLLVRIYCMLGAFEPVVDLYSSLDAKHIQHDTIGYLLTRYAESLGQYAAASQSCNFALRFFHSNQKDTSEYIIQAYKYGAFEKIPEFIAFRNRLNNSLHFAQVRTERMLLDLLLEANISTSLAESIKSMNLRPEEDDIPWEDLRDNRDLNVFFSWDPKDRDVSEEHKKLSLEEETLWLRIRSLTLRLISGLPSLNHPVEPKNSEKTAENGVSSRIDILRLLLQQLEATLETGKRFIEKDIQYPFLGPVPTRMGGFFNSGCSQCQISSFYLVNDIYELDTSGLEDTMEIQERIENSFKSLLDQLKDVFSKCKGDLLEVKDGNLKTHPTLLENLVFFVETISVILWVSSYCESVLRPYKLNLQKKKKKKKETSIIMPPVFTSFQDYVTGLQTLISNVVDHIKGLETHLIALKLEELILEDTSLSPEERKFSKTVQGKVQSSYLHSLLEMGELLKKRLETTKKLKI.

TPR repeat units follow at residues 11–44 (NDRRLRPIYDYLDNGNNKMAIQQADKLLKKHKDL), 45–78 (HCAKVLKAIGLQRTGKQEEAFTLAQEVAALEPTD), 79–112 (DNSLQALTILYREMHRPELVTKLYEAAVKKVPNS), and 114–146 (EYHSHLFMAYARVGEYKKMQQAGMALYKIVPKN).

It belongs to the MDM20/NAA25 family. As to quaternary structure, component of the N-terminal acetyltransferase B (NatB) complex which is composed of NAA20 and NAA25.

The protein localises to the cytoplasm. Non-catalytic subunit of the NatB complex which catalyzes acetylation of the N-terminal methionine residues of peptides beginning with Met-Asp, Met-Glu, Met-Asn and Met-Gln. May play a role in normal cell-cycle progression. This is N-alpha-acetyltransferase 25, NatB auxiliary subunit (NAA25) from Homo sapiens (Human).